A 429-amino-acid chain; its full sequence is Probable proton-coupled zinc antiporter SLC30A4 (429 aa).

Residues 1 to 113 (MAGSGAWKRL…ILKQRKVKAR (113 aa)) lie on the Cytoplasmic side of the membrane. Residues 114 to 134 (LTIAAVLYLLFMIGELVGGYI) form a helical membrane-spanning segment. Over 135–143 (ANSLAIMTD) the chain is Lumenal. A helical transmembrane segment spans residues 144–164 (ALHMLTDLSAIILTLLALWLS). Residues His-146 and Asp-150 each coordinate Zn(2+). Over 165 to 178 (SKSPTKRFTFGFHR) the chain is Cytoplasmic. The chain crosses the membrane as a helical span at residues 179-199 (LEVLSAMISVLLVYILMGFLL). The Lumenal portion of the chain corresponds to 200-216 (YEAVQRTIHMNYEINGD). The helical transmembrane segment at 217 to 237 (IMLITAAVGVAVNVIMGFLLN) threads the bilayer. Residues 238-274 (QSGHRHSHSHSLPSNSPTRGSGCERNHGQDSLAVRAA) are Cytoplasmic-facing. The zinc binding stretch occupies residues 240 to 264 (GHRHSHSHSLPSNSPTRGSGCERNH). The chain crosses the membrane as a helical span at residues 275 to 295 (FVHALGDLVQSVGVLIAAYII). 2 residues coordinate Zn(2+): His-277 and Asp-281. Topologically, residues 296-310 (RFKPEYKIADPICTY) are lumenal. A helical transmembrane segment spans residues 311-331 (VFSLLVAFTTFRIIWDTVVII). The Cytoplasmic segment spans residues 332–429 (LEGVPSHLNV…TCANCQSSSP (98 aa)).

Belongs to the cation diffusion facilitator (CDF) transporter (TC 2.A.4) family. SLC30A subfamily. As to quaternary structure, homodimer; dityrosine-linked. Homodimerization could be specific of the human protein and enhances the zinc transport efficiency. Interacts with TMEM163. Homodimerization through dityrosine bonds is stimulated by oxidative stress.

It is found in the endosome membrane. The protein localises to the late endosome membrane. Its subcellular location is the lysosome membrane. The catalysed reaction is Zn(2+)(in) + 2 H(+)(out) = Zn(2+)(out) + 2 H(+)(in). Probable proton-coupled zinc ion antiporter mediating zinc import from cytoplasm potentially into the endocytic compartment. Controls zinc deposition in milk. This Homo sapiens (Human) protein is Probable proton-coupled zinc antiporter SLC30A4.